The chain runs to 98 residues: Defensin (98 aa).

Disulfide bonds link Cys61-Cys88, Cys74-Cys94, and Cys78-Cys96.

Belongs to the invertebrate defensin family. Type 1 subfamily.

In Mamestra brassicae (Cabbage moth), this protein is Defensin.